A 292-amino-acid chain; its full sequence is Cyclin-dependent kinase 5 homolog (292 aa).

One can recognise a Protein kinase domain in the interval 4 to 286; the sequence is YEKLEKIGEG…AEQAMQHPYF (283 aa). ATP is bound by residues 10 to 18 and lysine 33; that span reads IGEGTYGTV. Threonine 14 is modified (phosphothreonine). Phosphotyrosine is present on tyrosine 15. The active-site Proton acceptor is aspartate 126. Serine 159 is subject to Phosphoserine.

Belongs to the protein kinase superfamily. CMGC Ser/Thr protein kinase family. CDC2/CDKX subfamily.

The catalysed reaction is L-seryl-[protein] + ATP = O-phospho-L-seryl-[protein] + ADP + H(+). It carries out the reaction L-threonyl-[protein] + ATP = O-phospho-L-threonyl-[protein] + ADP + H(+). Probably involved in the control of the cell cycle. Interacts with D1 and D3-type G1 cyclins. Possible regulator of neuronal differentiation and/or development. This is Cyclin-dependent kinase 5 homolog (Cdk5) from Glossina morsitans morsitans (Savannah tsetse fly).